The sequence spans 95 residues: Phospholipase A2 inhibitor gammaCdcPLI (95 aa).

Intrachain disulfides connect C2–C26, C5–C12, C19–C30, and C61–C77.

Forms dimers or higher order oligomers in a temperature-dependent manner in vitro. As to expression, expressed by the liver.

The protein resides in the secreted. In terms of biological role, inhibits the enzymatic activity of basic and acidic PLA2 from B.jararacussu and B.pauloensis, respectively, in a dose-dependent manner. Also inhibits myotoxicity and cytotoxicity of BnSp-7 of B.pauloensis. This Crotalus durissus collilineatus (Brazilian rattlesnake) protein is Phospholipase A2 inhibitor gammaCdcPLI.